A 90-amino-acid polypeptide reads, in one-letter code: Large ribosomal subunit protein bL27 (90 aa).

A disordered region spans residues 1-21 (MASKKAGGSTRNGRDSEAKRL).

The protein belongs to the bacterial ribosomal protein bL27 family.

This Neisseria gonorrhoeae (strain ATCC 700825 / FA 1090) protein is Large ribosomal subunit protein bL27.